A 722-amino-acid chain; its full sequence is MAR-binding filament-like protein 1-1 (722 aa).

A disordered region spans residues 1 to 20 (MGSSCFPQSPLSHSLFSSSS). A chloroplast-targeting transit peptide spans 1-50 (MGSSCFPQSPLSHSLFSSSSLSSSQFTPLLFSPRNAQKCKKKMPAMACIH). Residues 51–84 (SENQKESEFCSRRTILFVGFSVLPLLSLRANAFE) constitute a thylakoid transit peptide. Residues 85–112 (GLSVDSQVKAQPQKEETEQTIQGNAENP) lie on the Lumenal, thylakoid side of the membrane. A helical membrane pass occupies residues 113–133 (FFSLLNGLGVFGSGVLGSLYA). Residues 134-722 (LARNEKAVSD…TQPASQQESS (589 aa)) are Stromal-facing. Positions 146 to 679 (IESMKNKLKE…KGEILRLRTQ (534 aa)) form a coiled coil. A disordered region spans residues 687–722 (VNNEEKVEAGEKAAVTVKRTRRRKTATQPASQQESS). The Nuclear localization signal motif lies at 705-712 (RTRRRKTA).

In terms of assembly, interacts with PTST2; the interaction is essential for the initiation of starch granules biosynthesis in leaf chloroplasts, for the correct location of the process in the stromal spaces between the thylakoid membranes, and for the association of PTST2 with the thylakoid membranes. Post-translationally, predicted to be translocated into the thylakoid by the Tat system.

It is found in the plastid. The protein localises to the chloroplast. It localises to the chloroplast thylakoid membrane. Its subcellular location is the chloroplast stroma. The protein resides in the chloroplast nucleoid. It is found in the nucleus. The protein localises to the nucleus matrix. Its function is as follows. Required for the initiation of starch granules biosynthesis in leaf chloroplasts. Anchored to the thylakoid membranes with its C-terminus facing into the stroma where it is essential for localizing PTST2 and SS4 to the stromal spaces between the thylakoid membranes in order to begin starch granule formation. Associated with leaf chloroplastic nucleoids in vivo. Binds to various chloroplastic double-stranded DNA fragments without particular sequence specificity in vitro. May function at the interface between nucleoids and thylakoids possibly by anchoring nucleoids to the thylakoid membrane system in mature chloroplasts. Likely to participate in nuclear architecture by connecting chromatin with the nuclear matrix and potentially with the nuclear envelope. The polypeptide is MAR-binding filament-like protein 1-1 (Nicotiana tabacum (Common tobacco)).